The primary structure comprises 308 residues: V-type immunoglobulin domain-containing suppressor of T-cell activation (308 aa).

Residues 1-32 form the signal peptide; that stretch reads MGVPAVPEASSPRWGTLLLAIFLAASRGLVAA. An Ig-like V-type domain is found at 33–167; sequence FKVTTPYSLY…RFYGSMELQV (135 aa). Topologically, residues 33–191 are extracellular; sequence FKVTTPYSLY…EQDSDSITAA (159 aa). N-linked (GlcNAc...) asparagine glycans are attached at residues Asn-49, Asn-91, and Asn-127. A disulfide bond links Cys-54 and Cys-145. The helical transmembrane segment at 192 to 212 threads the bilayer; the sequence is ALATGACIVGILCLPLILLLV. The Cytoplasmic segment spans residues 213–308; the sequence is YKQRQVASHR…VPDSPNSEAI (96 aa). A disordered region spans residues 230–308; it reads MDSNTQGIEN…VPDSPNSEAI (79 aa). Residue Ser-232 is modified to Phosphoserine.

At the cell surface, may be cleaved by MMP14. Post-translationally, N-glycosylated. As to expression, expressed in spleen, thymus, bone marrow, lymph node, and in T-cells within the lamina propria of the small intestine. Detected on CD4+ and CD8+ T-cells, bone marrow-derived dendritic cells (BMDCs), peritoneal macrophages, neutrophils, and natural killer (NK) cells. In spleen and lymph nodes, highly expressed on CD4+ T-cell populations, and at lower levels on CD8+ T-cells. In thymus, has low expression on CD4+ cells and CD8+ cells, and not detected on CD4+CD8+ cells. Expressed in splenic and peritoneal CD11b cells. Not detected in most B cells and NK cells (at protein level). Also detected at lower levels in non-hematopoeitic tissues such as heart, brain, lung, kidney, muscle, ovary, and testis.

Its subcellular location is the cell membrane. Immunoregulatory receptor which inhibits the T-cell response. May promote differentiation of embryonic stem cells, by inhibiting BMP4 signaling. May stimulate MMP14-mediated MMP2 activation. The sequence is that of V-type immunoglobulin domain-containing suppressor of T-cell activation from Mus musculus (Mouse).